The chain runs to 301 residues: D-alanine--D-alanine ligase A (301 aa).

The ATP-grasp domain maps to 99-293 (KRILAFGNVR…FEELLDTIIE (195 aa)). Position 126–181 (126–181 (IENLGYPVFVKPNNGGSSVATTLVESKEAVKDAVLEALKYDTEVMIEEYIKGDEIT)) interacts with ATP. Mg(2+) is bound by residues aspartate 248, glutamate 260, and asparagine 262.

Belongs to the D-alanine--D-alanine ligase family. The cofactor is Mg(2+). Requires Mn(2+) as cofactor.

It is found in the cytoplasm. It catalyses the reaction 2 D-alanine + ATP = D-alanyl-D-alanine + ADP + phosphate + H(+). The protein operates within cell wall biogenesis; peptidoglycan biosynthesis. Functionally, cell wall formation. This is D-alanine--D-alanine ligase A from Clostridium perfringens (strain 13 / Type A).